Here is a 282-residue protein sequence, read N- to C-terminus: MAGEMVEMEVNESAVGSSKTRVISYLRNAGFLEASDSIAVEEPLAIDILGPDGITVRAGVIMRTPVMDRYLVAGFLYSEGLISGISDIEGFEGVDEDGVSHQNHATVKIGKRIGFNVNSRLLNSACGICGRSTIADLLIRHGKIGTDTRIDSETILGLPTAMGRAQALFLKTGGVHAAALFDVQGRLHAVCEDIGRHNAVDKVVGYTLLEGKDTDNSVLMVSGRAGFEIVEKAFLAGFPIVSSVSAPSSLAIQIAEAVGITLVCFVRNNRFNIYSHPERIIP.

Catalysis depends on Cys126, which acts as the Cysteine persulfide intermediate. 265–270 (FVRNNR) contacts Mo-bis(molybdopterin guanine dinucleotide).

It belongs to the FdhD family.

It localises to the cytoplasm. In terms of biological role, required for formate dehydrogenase (FDH) activity. Acts as a sulfur carrier protein that transfers sulfur from IscS to the molybdenum cofactor prior to its insertion into FDH. The sequence is that of Sulfur carrier protein FdhD from Thermoplasma acidophilum (strain ATCC 25905 / DSM 1728 / JCM 9062 / NBRC 15155 / AMRC-C165).